The primary structure comprises 160 residues: UPF0178 protein PLES_56411 (160 aa).

Belongs to the UPF0178 family.

The polypeptide is UPF0178 protein PLES_56411 (Pseudomonas aeruginosa (strain LESB58)).